Here is a 119-residue protein sequence, read N- to C-terminus: NADH-quinone oxidoreductase subunit A (119 aa).

3 helical membrane passes run 7-27 (FPVL…MSIG), 63-83 (LIAI…PWGV), and 88-108 (IGWP…VGFV).

This sequence belongs to the complex I subunit 3 family. NDH-1 is composed of 14 different subunits. Subunits NuoA, H, J, K, L, M, N constitute the membrane sector of the complex.

Its subcellular location is the cell inner membrane. It catalyses the reaction a quinone + NADH + 5 H(+)(in) = a quinol + NAD(+) + 4 H(+)(out). NDH-1 shuttles electrons from NADH, via FMN and iron-sulfur (Fe-S) centers, to quinones in the respiratory chain. The immediate electron acceptor for the enzyme in this species is believed to be ubiquinone. Couples the redox reaction to proton translocation (for every two electrons transferred, four hydrogen ions are translocated across the cytoplasmic membrane), and thus conserves the redox energy in a proton gradient. The sequence is that of NADH-quinone oxidoreductase subunit A from Cupriavidus pinatubonensis (strain JMP 134 / LMG 1197) (Cupriavidus necator (strain JMP 134)).